The chain runs to 22 residues: Cysteine-rich venom protein collettin-a (22 aa).

The span at 1–15 shows a compositional bias: basic and acidic residues; that stretch reads SNKKNYQKEIVDKHN. The interval 1–22 is disordered; it reads SNKKNYQKEIVDKHNALRRSVK.

This sequence belongs to the CRISP family. Post-translationally, contains 8 disulfide bonds. In terms of tissue distribution, expressed by the venom gland.

Its subcellular location is the secreted. This Pseudechis colletti (Collett's snake) protein is Cysteine-rich venom protein collettin-a.